The following is a 430-amino-acid chain: Cytochrome P450 monooxygenase FGSG_15680 (430 aa).

Heme is bound at residue Cys-351.

This sequence belongs to the cytochrome P450 family. Heme serves as cofactor.

The protein operates within mycotoxin biosynthesis. Functionally, cytochrome P450 monooxygenase; part of the gene cluster that mediates the biosynthesis of gramillins A and B, bicyclic lipopeptides that induce cell death in maize leaves but not in wheat leaves. The nonribosomal peptide synthetase GRA1 incorporates respectively a glutamic adic (Glu), a leucine (Leu), a serine (Ser), a hydroxyglutamine (HOGln), a 2-amino decanoic acid, and 2 cysteins (CysB and CysA). The biosynthesis of 2-amino decanoic acid incorporated in gramillins could be initiated by a fatty acid synthase composed of the alpha and beta subunits FGSG_00036 and FGSG_11656. The cytochrome P450 monooxygenase FGSG_15680 could hydroxylate the fatty acid chain. Subsequent oxidation to the ketone by the oxidoreductase FGSG_00048 and transamination by aminotransferase FGSG_00049 could form 2-amino-decanoic acid. On the other hand, FGSG_15680 could also be responsible for the HO-modified glutamine at the gamma-position. Whether hydroxylation occurs on the fully assembled product or on the Gln residue prior to assembly into the gramillins requires further proof. The thioredoxin FGSG_00043 could also be required for the disulfide-bond formation between CysA and CysB. The specific involvement of the remaining proteins from the cluster is more difficult to discern, but could have broader regulatory (FGSG_00040 and FGSG_11657) or enzymatic functions (FGSG_00044 and FGSG_00045). The final C-domain of GRA1 does not possess the expected sequence of a termination CT domain, often implicated in macrocyclization and release of a cyclopeptidein fungal NRPs; and the thioesterase FGSG_00047 may act in concert with the terminal C-domain of GRA1 to catalyze the formation of the macrocyclic anhydride and release of the products. This is Cytochrome P450 monooxygenase FGSG_15680 from Gibberella zeae (strain ATCC MYA-4620 / CBS 123657 / FGSC 9075 / NRRL 31084 / PH-1) (Wheat head blight fungus).